The following is a 209-amino-acid chain: Nucleoside triphosphate pyrophosphatase (209 aa).

The active-site Proton acceptor is aspartate 79.

Belongs to the Maf family. It depends on a divalent metal cation as a cofactor.

It localises to the cytoplasm. It carries out the reaction a ribonucleoside 5'-triphosphate + H2O = a ribonucleoside 5'-phosphate + diphosphate + H(+). It catalyses the reaction a 2'-deoxyribonucleoside 5'-triphosphate + H2O = a 2'-deoxyribonucleoside 5'-phosphate + diphosphate + H(+). In terms of biological role, nucleoside triphosphate pyrophosphatase. May have a dual role in cell division arrest and in preventing the incorporation of modified nucleotides into cellular nucleic acids. The sequence is that of Nucleoside triphosphate pyrophosphatase from Mycolicibacterium gilvum (strain PYR-GCK) (Mycobacterium gilvum (strain PYR-GCK)).